Consider the following 137-residue polypeptide: uncharacterized protein (137 aa).

A run of 2 helical transmembrane segments spans residues 36–52 (LAPPADVCIFFLFPFVL) and 113–129 (FYGYVPIFSAFGIIFCF).

The protein localises to the membrane. This is an uncharacterized protein from Saccharomyces cerevisiae (strain ATCC 204508 / S288c) (Baker's yeast).